Consider the following 748-residue polypeptide: MSFIDPYQHIVVEHQYSHVFTVTVRKATNVTKGAIGDMLDTPDPYVELFIPSAPDCRKRTKHFNNDVNPVWNETFEFILDPNQDNVLEVTLMDANYVMDETLGMATFPISSLKLGEKKEVQLTFNNVTEMTLELSLEVCSSTDLRFSMALCDEEKKFRQQRKDNIMQSMKSFLGEENSKNLTTSRDVPVIAVLGSGGGFRAMVGFAGVMKALYESGVLDCATYIAGLSGSTWYMSTLYSHPDFPEKGPKEINQELMNSVSHNPLLLLTPQKVKRYIEALWNKKSSGQPVTFTDIFGMLIGETLIHNRMDTTLSDMKEKVSEAQCALPLFTCLHVKPDVSELMFADWVEFSPYEIGMAKYGTFMSPDLFGSKFFMGTVVKKYSENPLHFLMGVWGSAFSILFNRVLGVSNSQNKGPTMEEELENIRLKHLVSNDSSDSEDESQHPKGTENSEANEEYQNSSQESWVQRMLMALVGDSALFNTREGRAGKVHNFMLGLNLNSCYPLSPLADLLTQESVEEDELDAAVADPDEFERIYEPLDVKSKKIHIVDSGLTFNLPYPLILRPQRGVDLIISFDFSARPSDSSPPFKEILLAEKWAKMNKLPFPKIDPNVFDREGLKECYVFKPKDTSSEKDCPTIIHFVLANINFRKYKAPGLPRESKEEKDFADFDIFDDPNTPFSTFNFQYPNEAFKRLHDLMEFNTLNNLDVIKQAMMESIEYRKENPSRCSVSLSSVEARRFFNKNNLNNHT.

Positions 1–178 (MSFIDPYQHI…MKSFLGEENS (178 aa)) are phospholipid binding. In terms of domain architecture, C2 spans 6 to 124 (PYQHIVVEHQ…GEKKEVQLTF (119 aa)). 7 residues coordinate Ca(2+): aspartate 40, threonine 41, aspartate 43, asparagine 65, aspartate 93, alanine 94, and asparagine 95. In terms of domain architecture, PLA2c spans 138-740 (VCSSTDLRFS…SSVEARRFFN (603 aa)). The active-site Nucleophile is the serine 228. A disordered region spans residues 431–459 (SNDSSDSEDESQHPKGTENSEANEEYQNS). Polar residues predominate over residues 449-459 (NSEANEEYQNS). Phosphoserine; by MAPK is present on serine 505. The active-site Proton acceptor is the aspartate 549.

Activated by phosphorylation on a serine residue.

It is found in the cytoplasm. Its subcellular location is the cytoplasmic vesicle. The enzyme catalyses a 1,2-diacyl-sn-glycero-3-phosphocholine + H2O = a 1-acyl-sn-glycero-3-phosphocholine + a fatty acid + H(+). The catalysed reaction is a 1-acyl-sn-glycero-3-phosphocholine + H2O = sn-glycerol 3-phosphocholine + a fatty acid + H(+). With respect to regulation, stimulated by agonists such as ATP, EGF, thrombin and bradykinin as well as by cytosolic Ca(2+). In terms of biological role, selectively hydrolyzes arachidonyl phospholipids in the sn-2 position releasing arachidonic acid. Together with its lysophospholipid activity, it is implicated in the initiation of the inflammatory response. This is Cytosolic phospholipase A2 (PLA2G4A) from Gallus gallus (Chicken).